The primary structure comprises 217 residues: Leucyl/phenylalanyl-tRNA--protein transferase (217 aa).

It belongs to the L/F-transferase family.

The protein resides in the cytoplasm. The enzyme catalyses N-terminal L-lysyl-[protein] + L-leucyl-tRNA(Leu) = N-terminal L-leucyl-L-lysyl-[protein] + tRNA(Leu) + H(+). It catalyses the reaction N-terminal L-arginyl-[protein] + L-leucyl-tRNA(Leu) = N-terminal L-leucyl-L-arginyl-[protein] + tRNA(Leu) + H(+). It carries out the reaction L-phenylalanyl-tRNA(Phe) + an N-terminal L-alpha-aminoacyl-[protein] = an N-terminal L-phenylalanyl-L-alpha-aminoacyl-[protein] + tRNA(Phe). Functionally, functions in the N-end rule pathway of protein degradation where it conjugates Leu, Phe and, less efficiently, Met from aminoacyl-tRNAs to the N-termini of proteins containing an N-terminal arginine or lysine. The chain is Leucyl/phenylalanyl-tRNA--protein transferase from Caulobacter vibrioides (strain ATCC 19089 / CIP 103742 / CB 15) (Caulobacter crescentus).